The primary structure comprises 189 residues: Phosphoheptose isomerase (189 aa).

Positions 34–189 (AVETLKNGNK…CQIIDNELSH (156 aa)) constitute an SIS domain. Position 49–51 (49–51 (NGG)) interacts with substrate. 2 residues coordinate Zn(2+): H58 and E62. Substrate is bound by residues E62, 91 to 92 (ND), 117 to 119 (STS), S122, and Q169. Zn(2+)-binding residues include Q169 and H177.

It belongs to the SIS family. GmhA subfamily. As to quaternary structure, homotetramer. Requires Zn(2+) as cofactor.

Its subcellular location is the cytoplasm. The catalysed reaction is 2 D-sedoheptulose 7-phosphate = D-glycero-alpha-D-manno-heptose 7-phosphate + D-glycero-beta-D-manno-heptose 7-phosphate. It participates in carbohydrate biosynthesis; D-glycero-D-manno-heptose 7-phosphate biosynthesis; D-glycero-alpha-D-manno-heptose 7-phosphate and D-glycero-beta-D-manno-heptose 7-phosphate from sedoheptulose 7-phosphate: step 1/1. Functionally, catalyzes the isomerization of sedoheptulose 7-phosphate in D-glycero-D-manno-heptose 7-phosphate. The protein is Phosphoheptose isomerase of Aliarcobacter butzleri (strain RM4018) (Arcobacter butzleri).